The sequence spans 336 residues: Biotin synthase (336 aa).

Residues 54 to 281 enclose the Radical SAM core domain; the sequence is NAIQLSTLLS…KAMVRLSAGR (228 aa). The [4Fe-4S] cluster site is built by Cys-69, Cys-73, and Cys-76. Cys-113, Cys-144, Cys-204, and Arg-276 together coordinate [2Fe-2S] cluster.

This sequence belongs to the radical SAM superfamily. Biotin synthase family. Homodimer. [4Fe-4S] cluster is required as a cofactor. The cofactor is [2Fe-2S] cluster.

It carries out the reaction (4R,5S)-dethiobiotin + (sulfur carrier)-SH + 2 reduced [2Fe-2S]-[ferredoxin] + 2 S-adenosyl-L-methionine = (sulfur carrier)-H + biotin + 2 5'-deoxyadenosine + 2 L-methionine + 2 oxidized [2Fe-2S]-[ferredoxin]. It functions in the pathway cofactor biosynthesis; biotin biosynthesis; biotin from 7,8-diaminononanoate: step 2/2. Catalyzes the conversion of dethiobiotin (DTB) to biotin by the insertion of a sulfur atom into dethiobiotin via a radical-based mechanism. The polypeptide is Biotin synthase (Burkholderia thailandensis (strain ATCC 700388 / DSM 13276 / CCUG 48851 / CIP 106301 / E264)).